The following is a 287-amino-acid chain: 1-acyl-sn-glycerol-3-phosphate acyltransferase alpha (287 aa).

Residues 1–26 (MELWPGAGTLLLLLFLLLLLLLPTLW) form the signal peptide. The Lumenal portion of the chain corresponds to 27–37 (FCSPSAKYFFK). A helical transmembrane segment spans residues 38–58 (MAFYNGWILFLAVLAIPVCAV). Residues 59 to 127 (RGRNVENMKI…PGRCVPIAKR (69 aa)) lie on the Cytoplasmic side of the membrane. Positions 104–109 (HQSSLD) match the HXXXXD motif motif. Residues 128–148 (ELLWAGSAGLACWLAGVIFID) traverse the membrane as a helical segment. Residues 149 to 287 (RKRTGDAISV…KPGGVGEAGL (139 aa)) lie on the Lumenal side of the membrane. Positions 178 to 181 (EGTR) match the EGTR motif motif.

This sequence belongs to the 1-acyl-sn-glycerol-3-phosphate acyltransferase family.

The protein resides in the endoplasmic reticulum membrane. The catalysed reaction is a 1-acyl-sn-glycero-3-phosphate + an acyl-CoA = a 1,2-diacyl-sn-glycero-3-phosphate + CoA. It catalyses the reaction 1-(9Z-octadecenoyl)-sn-glycero-3-phosphate + (9Z)-octadecenoyl-CoA = 1,2-di-(9Z-octadecenoyl)-sn-glycero-3-phosphate + CoA. The enzyme catalyses 1-(9Z-octadecenoyl)-sn-glycero-3-phosphate + hexadecanoyl-CoA = 1-(9Z)-octadecenoyl-2-hexadecanoyl-sn-glycero-3-phosphate + CoA. It carries out the reaction heptadecanoyl-CoA + 1-(9Z-octadecenoyl)-sn-glycero-3-phosphate = 1-(9Z)-octadecenoyl-2-heptadecanoyl-sn-glycero-3-phosphate + CoA. The catalysed reaction is 1-(9Z-octadecenoyl)-sn-glycero-3-phosphate + octadecanoyl-CoA = 1-(9Z-octadecenoyl)-2-octadecanoyl-sn-glycero-3-phosphate + CoA. It catalyses the reaction 1-(9Z-octadecenoyl)-sn-glycero-3-phosphate + (9Z,12Z)-octadecadienoyl-CoA = 1-(9Z)-octadecenoyl-2-(9Z,12Z)-octadecadienoyl-sn-glycero-3-phosphate + CoA. The enzyme catalyses 1-(9Z-octadecenoyl)-sn-glycero-3-phosphate + tetradecanoyl-CoA = 1-(9Z)-octadecenoyl-2-tetradecanoyl-sn-glycero-3-phosphate + CoA. It carries out the reaction pentadecanoyl-CoA + 1-(9Z-octadecenoyl)-sn-glycero-3-phosphate = 1-(9Z)-octadecenoyl-2-pentadecanoyl-sn-glycero-3-phosphate + CoA. The catalysed reaction is 1-hexadecanoyl-sn-glycero-3-phosphate + (9Z)-octadecenoyl-CoA = 1-hexadecanoyl-2-(9Z-octadecenoyl)-sn-glycero-3-phosphate + CoA. It catalyses the reaction 1-(9Z,12Z,15Z)-octadecatrienoyl-sn-glycero-3-phosphate + (9Z)-octadecenoyl-CoA = 1-(9Z,12Z,15Z)-octadecatrienoyl-2-(9Z)-octadecenoyl-sn-glycero-3-phosphate + CoA. The enzyme catalyses 1-(6Z,9Z,12Z-octadecatrienoyl)-sn-glycero-3-phosphate + (9Z)-octadecenoyl-CoA = (6Z,9Z,12Z)-octadecatrienoyl-2-(9Z)-octadecenoyl-sn-glycero-3-phosphate + CoA. It carries out the reaction 1-eicosanoyl-sn-glycero-3-phosphate + (9Z)-octadecenoyl-CoA = 1-eicosanoyl-2-(9Z)-octadecenoyl-sn-glycero-3-phosphate + CoA. The catalysed reaction is 1-tetradecanoyl-sn-glycerol 3-phosphate + (9Z)-octadecenoyl-CoA = 1-tetradecanoyl-2-(9Z)-octadecenoyl-sn-glycero-3-phosphate + CoA. It catalyses the reaction 1-(9Z-octadecenoyl)-sn-glycero-3-phosphate + (5Z,8Z,11Z,14Z)-eicosatetraenoyl-CoA = 1-(9Z)-octadecenoyl-2-(5Z,8Z,11Z,14Z)-eicosatetraenoyl-sn-glycero-3-phosphate + CoA. The enzyme catalyses 1-(9Z-octadecenoyl)-sn-glycero-3-phosphate + dodecanoyl-CoA = 1-(9Z)-octadecenoyl-2-dodecanoyl-sn-glycero-3-phosphate + CoA. It carries out the reaction (6Z)-octadecenoyl-CoA + 1-(9Z-octadecenoyl)-sn-glycero-3-phosphate = 1-(9Z)-octadecenoyl-2-(6Z)-octadecenoyl-sn-glycero-3-phosphate + CoA. The catalysed reaction is (11Z)-octadecenoyl-CoA + 1-(9Z-octadecenoyl)-sn-glycero-3-phosphate = 1-(9Z)-octadecenoyl-2-(11Z)-octadecenoyl-sn-glycero-3-phosphate + CoA. It catalyses the reaction (9Z)-hexadecenoyl-CoA + 1-(9Z-octadecenoyl)-sn-glycero-3-phosphate = 1-(9Z-octadecenoyl)-2-(9Z-hexadecenoyl)-sn-glycero-3-phosphate + CoA. The protein operates within phospholipid metabolism; CDP-diacylglycerol biosynthesis; CDP-diacylglycerol from sn-glycerol 3-phosphate: step 2/3. Functionally, converts 1-acyl-sn-glycerol-3-phosphate (lysophosphatidic acid or LPA) into 1,2-diacyl-sn-glycerol-3-phosphate (phosphatidic acid or PA) by incorporating an acyl moiety at the sn-2 position of the glycerol backbone. The protein is 1-acyl-sn-glycerol-3-phosphate acyltransferase alpha (AGPAT1) of Bos taurus (Bovine).